The sequence spans 76 residues: UPF0154 protein LCA_1273 (76 aa).

Residues 3–23 (IGIGVLIFVIGALLGAVAGFF) form a helical membrane-spanning segment. Residues 55 to 76 (PSEKKLNQMMSSMKAQQKRSKK) form a disordered region.

It belongs to the UPF0154 family.

The protein localises to the cell membrane. This chain is UPF0154 protein LCA_1273, found in Latilactobacillus sakei subsp. sakei (strain 23K) (Lactobacillus sakei subsp. sakei).